Here is a 635-residue protein sequence, read N- to C-terminus: Interferon-induced GTP-binding protein Mx2 (635 aa).

One can recognise a Dynamin-type G domain in the interval 31–304 (DLALPAIAVI…LVQHIEKSMP (274 aa)). The segment at 41–48 (GDQSSGKS) is G1 motif. Position 41–48 (41–48 (GDQSSGKS)) interacts with GTP. Residues 66 to 68 (VTR) form a G2 motif region. The tract at residues 142 to 145 (DLPG) is G3 motif. Residues 142 to 146 (DLPGI) and 211 to 214 (TKPD) each bind GTP. Residues 211-214 (TKPD) are G4 motif. The segment at 243–246 (KCRG) is G5 motif. In terms of domain architecture, GED spans 549–635 (LREMMLHLKS…MKAHNYLVEF (87 aa)).

This sequence belongs to the TRAFAC class dynamin-like GTPase superfamily. Dynamin/Fzo/YdjA family.

Its subcellular location is the nucleus. The protein localises to the cytoplasm. Its function is as follows. Does not inhibit strain RB-1 of the fish pathogen, infectious hematopoietic necrosis virus (IHNV). The protein is Interferon-induced GTP-binding protein Mx2 of Oncorhynchus mykiss (Rainbow trout).